Consider the following 119-residue polypeptide: Beta-2-microglobulin (119 aa).

Positions 1 to 20 (MACSVVVALLALLSLSGLEA) are cleaved as a signal peptide. The region spanning 25-114 (PKIQVYSRHP…VTFSTPKTVK (90 aa)) is the Ig-like C1-type domain. Cysteine 45 and cysteine 100 are oxidised to a cystine.

It belongs to the beta-2-microglobulin family. As to quaternary structure, heterodimer of an alpha chain and a beta chain. Beta-2-microglobulin is the beta-chain of major histocompatibility complex class I molecules.

The protein localises to the secreted. Functionally, component of the class I major histocompatibility complex (MHC). Involved in the presentation of peptide antigens to the immune system. This chain is Beta-2-microglobulin (B2M), found in Mico emiliae (Emilia's marmoset).